A 412-amino-acid polypeptide reads, in one-letter code: Histidine--tRNA ligase (412 aa).

Belongs to the class-II aminoacyl-tRNA synthetase family. Homodimer.

It is found in the cytoplasm. The catalysed reaction is tRNA(His) + L-histidine + ATP = L-histidyl-tRNA(His) + AMP + diphosphate + H(+). The chain is Histidine--tRNA ligase from Rickettsia typhi (strain ATCC VR-144 / Wilmington).